The following is a 195-amino-acid chain: MRKAQVTRNTQETQITVAINLDGQGKAELDSGVPFLDHMLDQIARHGMIDLNVAAKGDLHIDAHHTVEDIGIALGQALNRAIGDKKGIFRYGHAYVPLDETLSRVVIDLSGRPGLQFNTTFTRAVIGSFDVDLIQEFFQGFVNHAMMTLHIDNLAGKNAHHQAESIFKAFGRALRMAVTIDPRCDDLIPSTKGVL.

The protein belongs to the imidazoleglycerol-phosphate dehydratase family.

It localises to the cytoplasm. It catalyses the reaction D-erythro-1-(imidazol-4-yl)glycerol 3-phosphate = 3-(imidazol-4-yl)-2-oxopropyl phosphate + H2O. It functions in the pathway amino-acid biosynthesis; L-histidine biosynthesis; L-histidine from 5-phospho-alpha-D-ribose 1-diphosphate: step 6/9. This is Imidazoleglycerol-phosphate dehydratase from Nitrosomonas eutropha (strain DSM 101675 / C91 / Nm57).